Consider the following 128-residue polypeptide: Aspartate 1-decarboxylase (128 aa).

Residue S25 is the Schiff-base intermediate with substrate; via pyruvic acid of the active site. A Pyruvic acid (Ser) modification is found at S25. T57 lines the substrate pocket. The active-site Proton donor is Y58. Residue 73–75 (GSA) coordinates substrate.

This sequence belongs to the PanD family. Heterooctamer of four alpha and four beta subunits. Pyruvate serves as cofactor. Post-translationally, is synthesized initially as an inactive proenzyme, which is activated by self-cleavage at a specific serine bond to produce a beta-subunit with a hydroxyl group at its C-terminus and an alpha-subunit with a pyruvoyl group at its N-terminus.

It is found in the cytoplasm. It carries out the reaction L-aspartate + H(+) = beta-alanine + CO2. It participates in cofactor biosynthesis; (R)-pantothenate biosynthesis; beta-alanine from L-aspartate: step 1/1. Functionally, catalyzes the pyruvoyl-dependent decarboxylation of aspartate to produce beta-alanine. The sequence is that of Aspartate 1-decarboxylase from Burkholderia pseudomallei (strain 668).